Consider the following 204-residue polypeptide: MKNESTTIDVPAESSSAMKGKAPLIGVARDHTTSGSGGYNRGLSIFDFLLRLAAIVAALAAAATMGTSDETLPFFTQFLQFEASYDDLPTFQFFVIAMALVGGYLVLSLPISVVTILRPLATAPRLLLLVLDTAVLALNTAAASSAAAISYLAHSGNQNTNWLPICQQFGDFCQKSSGAVVSAFISVVFFTILVVISGVALKRH.

The Cytoplasmic segment spans residues 1 to 42 (MKNESTTIDVPAESSSAMKGKAPLIGVARDHTTSGSGGYNRG). A helical transmembrane segment spans residues 43–63 (LSIFDFLLRLAAIVAALAAAA). The Extracellular portion of the chain corresponds to 64–92 (TMGTSDETLPFFTQFLQFEASYDDLPTFQ). Residues 93–113 (FFVIAMALVGGYLVLSLPISV) form a helical membrane-spanning segment. Residues 114-125 (VTILRPLATAPR) lie on the Cytoplasmic side of the membrane. Residues 126 to 146 (LLLLVLDTAVLALNTAAASSA) form a helical membrane-spanning segment. The Extracellular portion of the chain corresponds to 147–178 (AAISYLAHSGNQNTNWLPICQQFGDFCQKSSG). The chain crosses the membrane as a helical span at residues 179-199 (AVVSAFISVVFFTILVVISGV). Over 200-204 (ALKRH) the chain is Cytoplasmic.

This sequence belongs to the Casparian strip membrane proteins (CASP) family. As to quaternary structure, homodimer and heterodimers.

It localises to the cell membrane. Regulates membrane-cell wall junctions and localized cell wall deposition. Required for establishment of the Casparian strip membrane domain (CSD) and the subsequent formation of Casparian strips, a cell wall modification of the root endodermis that determines an apoplastic barrier between the intraorganismal apoplasm and the extraorganismal apoplasm and prevents lateral diffusion. This chain is Casparian strip membrane protein 2, found in Arabidopsis lyrata subsp. lyrata (Lyre-leaved rock-cress).